A 751-amino-acid chain; its full sequence is Photosystem I P700 chlorophyll a apoprotein A1 (751 aa).

A run of 8 helical transmembrane segments spans residues 73–96 (IFSA…FHGA), 159–182 (LYCT…FHYH), 198–222 (MNHH…HLSL), 294–312 (TAHH…GHMY), 349–372 (WHAQ…HHMY), 388–414 (LSLF…IFMV), 435–457 (AIVS…LYIH), and 532–550 (FLVH…LILV). Residues cysteine 574 and cysteine 583 each contribute to the [4Fe-4S] cluster site. 2 helical membrane-spanning segments follow: residues 590–611 (HVFL…HFSW) and 665–687 (LSAY…MFLF). Histidine 676 contributes to the chlorophyll a' binding site. Residues methionine 684 and tyrosine 692 each contribute to the chlorophyll a site. Tryptophan 693 contacts phylloquinone. Residues 725–745 (AVGVAHYLLGGIGTTWAFFLA) form a helical membrane-spanning segment.

This sequence belongs to the PsaA/PsaB family. As to quaternary structure, the PsaA/B heterodimer binds the P700 chlorophyll special pair and subsequent electron acceptors. PSI consists of a core antenna complex that captures photons, and an electron transfer chain that converts photonic excitation into a charge separation. The eukaryotic PSI reaction center is composed of at least 11 subunits. Requires P700 is a chlorophyll a/chlorophyll a' dimer, A0 is one or more chlorophyll a, A1 is one or both phylloquinones and FX is a shared 4Fe-4S iron-sulfur center. as cofactor.

The protein resides in the plastid. It localises to the chloroplast thylakoid membrane. The catalysed reaction is reduced [plastocyanin] + hnu + oxidized [2Fe-2S]-[ferredoxin] = oxidized [plastocyanin] + reduced [2Fe-2S]-[ferredoxin]. Its function is as follows. PsaA and PsaB bind P700, the primary electron donor of photosystem I (PSI), as well as the electron acceptors A0, A1 and FX. PSI is a plastocyanin/cytochrome c6-ferredoxin oxidoreductase, converting photonic excitation into a charge separation, which transfers an electron from the donor P700 chlorophyll pair to the spectroscopically characterized acceptors A0, A1, FX, FA and FB in turn. Oxidized P700 is reduced on the lumenal side of the thylakoid membrane by plastocyanin or cytochrome c6. This chain is Photosystem I P700 chlorophyll a apoprotein A1, found in Pyropia yezoensis (Susabi-nori).